Reading from the N-terminus, the 302-residue chain is MDQKRLTHLRQLEAESIHIIREVAAEFSNPVMMYSIGKDSSVMLHLARKAFYPGTLPFPLLHVDTGWKFREMYEFRDRTAKAYGCELLVHKNPEGVAMGINPFVHGSGKHTDIMKTEGLKQALNKYGFDAAFGGARRDEEKSRAKERIYSFRDRFHRWDPKNQRPELWHNYNGQINKGESIRVFPLSNWTELDIWQYIYLENIDIVPLYLAAERPVLERDGMLMMIDDDRIDLQPGEEIKNQMVRFRTLGCWPLTGAVESNAQTLPEIIEEMLVSTTSERQGRVIDRDQAGSMELKKRQGYF.

This sequence belongs to the PAPS reductase family. CysD subfamily. As to quaternary structure, heterodimer composed of CysD, the smaller subunit, and CysN.

The catalysed reaction is sulfate + ATP + H(+) = adenosine 5'-phosphosulfate + diphosphate. The protein operates within sulfur metabolism; hydrogen sulfide biosynthesis; sulfite from sulfate: step 1/3. Functionally, with CysN forms the ATP sulfurylase (ATPS) that catalyzes the adenylation of sulfate producing adenosine 5'-phosphosulfate (APS) and diphosphate, the first enzymatic step in sulfur assimilation pathway. APS synthesis involves the formation of a high-energy phosphoric-sulfuric acid anhydride bond driven by GTP hydrolysis by CysN coupled to ATP hydrolysis by CysD. In Enterobacter sp. (strain 638), this protein is Sulfate adenylyltransferase subunit 2.